A 576-amino-acid polypeptide reads, in one-letter code: (+)-alpha-terpineol synthase (576 aa).

5 residues coordinate (2E)-geranyl diphosphate: Arg-286, Asp-323, Asp-327, Arg-466, and Asn-469. Mg(2+)-binding residues include Asp-323 and Asp-327. The DDXXD motif motif lies at Asp-323–Asp-327. Residues Asn-469, Thr-473, and Glu-477 each coordinate Mg(2+).

It belongs to the terpene synthase family. Tpsb subfamily. Mg(2+) is required as a cofactor. Requires Mn(2+) as cofactor.

The enzyme catalyses (2E)-geranyl diphosphate + H2O = (R)-alpha-terpineol + diphosphate. Monoterpene synthase producing mainly (+)-alpha-terpineol (44%) and (-)-limonene (33.6%) and lower amounts of (E)-geraniol (5.9%), linalool (5.0%), myrcene (3.4%), (-)-alpha-pinene (3.3%), (+)-sabinene (3.0%) and alpha-terpinolene (1.6%). This Santalum album (White sandalwood) protein is (+)-alpha-terpineol synthase.